A 1235-amino-acid chain; its full sequence is ATP-dependent DNA helicase mph1 (1235 aa).

Disordered stretches follow at residues 20–78 and 96–148; these read LTQA…YRIH and DEMP…VHSP. Residues 61–72 are compositionally biased toward basic and acidic residues; that stretch reads SRSDNDEADEKK. A compositionally biased stretch (polar residues) spans 137–148; it reads AKTQKQNIVHSP. The Helicase ATP-binding domain occupies 272–440; it reads IVHKGLFNNL…EVIDNLEIAE (169 aa). 285–292 is an ATP binding site; sequence LPTGLGKT. Positions 388-391 match the DEAH box motif; the sequence is DEAH. The 177-residue stretch at 608-784 folds into the Helicase C-terminal domain; the sequence is KLTYLCDTVL…GSRFTFRHDL (177 aa). Disordered regions lie at residues 808 to 827, 944 to 1117, and 1144 to 1235; these read NTQD…RKKL, SRLQ…PPLM, and TGAK…DSDE. Over residues 947–958 the composition is skewed to basic and acidic residues; that stretch reads QRPEDRDNKPYG. Basic residues predominate over residues 1015–1027; that stretch reads VAPKKAKPRRGRA. A compositionally biased stretch (basic and acidic residues) spans 1065-1074; it reads PGERVDRTSD. Positions 1075-1085 are enriched in acidic residues; sequence MEELEADDDSD. Polar residues-rich tracts occupy residues 1095–1114 and 1146–1159; these read PTQT…SSSP and AKNS…MTQE. Over residues 1160–1170 the composition is skewed to low complexity; sequence SSDGGDSMDSD. Positions 1194–1209 are enriched in polar residues; that stretch reads PSSSVFSSGQKATPNM.

This sequence belongs to the DEAD box helicase family. DEAH subfamily. FANCM sub-subfamily. Interacts with the MHF histone-fold complex to form the FANCM-MHF complex.

The protein localises to the nucleus. The enzyme catalyses ATP + H2O = ADP + phosphate + H(+). Its function is as follows. ATP-dependent DNA helicase involved in DNA damage repair by homologous recombination and in genome maintenance. Capable of unwinding D-loops. Plays a role in limiting crossover recombinants during mitotic DNA double-strand break (DSB) repair. Component of a FANCM-MHF complex which promotes gene conversion at blocked replication forks, probably by reversal of the stalled fork. The chain is ATP-dependent DNA helicase mph1 from Sclerotinia sclerotiorum (strain ATCC 18683 / 1980 / Ss-1) (White mold).